A 298-amino-acid chain; its full sequence is 3-sulfolactaldehyde reductase (298 aa).

Residues 11–12, D31, L65, and T96 contribute to the NAD(+) site; that span reads QM. Residue R123 participates in 2,3-dihydroxypropane-1-sulfonate binding. K171 is an active-site residue. 2,3-dihydroxypropane-1-sulfonate is bound at residue 174 to 178; the sequence is NNYMS. K240 is an NAD(+) binding site.

It belongs to the HIBADH-related family. 3-sulfolactaldehyde reductase subfamily. As to quaternary structure, homotetramer. Dimer of dimers.

It carries out the reaction (2S)-3-sulfopropanediol + NAD(+) = (2S)-3-sulfolactaldehyde + NADH + H(+). It catalyses the reaction 4-hydroxybutanoate + NAD(+) = succinate semialdehyde + NADH + H(+). With respect to regulation, inhibited by the NADH analogs tetrahydro-NADH and hexahydro-NADH. Functionally, reduces 3-sulfolactaldehyde (SLA) to 2,3-dihydroxypropane 1-sulfonate (DHPS). Metabolite profiling studies showed that the enzyme also catalyzes in vitro the NADH-dependent reduction of succinic semialdehyde (SSA) to 4-hydroxybutyrate (GHB), and that it could be involved in the metabolism of SSA, and other potentially toxic intermediates that may accumulate under stress conditions. However, the enzyme exhibits a 42,000-fold greater catalytic efficiency for the reduction of SLA over SSA. Shows no detectable activity on the analogous glycolytic intermediate glyceraldehyde-3-phosphate. The protein is 3-sulfolactaldehyde reductase (yihU) of Escherichia coli (strain K12).